Consider the following 620-residue polypeptide: 1-deoxy-D-xylulose-5-phosphate synthase (620 aa).

Thiamine diphosphate contacts are provided by residues His80 and 121–123 (GHS). A Mg(2+)-binding site is contributed by Asp152. Residues 153-154 (GA), Asn181, Tyr288, and Glu370 contribute to the thiamine diphosphate site. Asn181 provides a ligand contact to Mg(2+).

The protein belongs to the transketolase family. DXPS subfamily. In terms of assembly, homodimer. The cofactor is Mg(2+). It depends on thiamine diphosphate as a cofactor.

It catalyses the reaction D-glyceraldehyde 3-phosphate + pyruvate + H(+) = 1-deoxy-D-xylulose 5-phosphate + CO2. It participates in metabolic intermediate biosynthesis; 1-deoxy-D-xylulose 5-phosphate biosynthesis; 1-deoxy-D-xylulose 5-phosphate from D-glyceraldehyde 3-phosphate and pyruvate: step 1/1. In terms of biological role, catalyzes the acyloin condensation reaction between C atoms 2 and 3 of pyruvate and glyceraldehyde 3-phosphate to yield 1-deoxy-D-xylulose-5-phosphate (DXP). The polypeptide is 1-deoxy-D-xylulose-5-phosphate synthase (Sodalis glossinidius (strain morsitans)).